The sequence spans 409 residues: Putative competence-damage inducible protein (409 aa).

This sequence belongs to the CinA family.

The chain is Putative competence-damage inducible protein from Clostridium botulinum (strain 657 / Type Ba4).